The sequence spans 189 residues: MSRIGKRPIPIPNKVTVDIDGATVTVKGPKGTLQRTLPTAVAINKDGETLLVTRQDDSRTARERHGLCRTLVANMVEGVATGFQKRLDIQGVGYRAQAQGSKLVLNVGYSKPVEMEMPDGVSVAVENSTQVIVSGIDKEAVGNTAAKIREVRPPEPYKGKGIRYLGEVVRRKVGKAGGKGAKGGKGGKK.

Belongs to the universal ribosomal protein uL6 family. In terms of assembly, part of the 50S ribosomal subunit.

This protein binds to the 23S rRNA, and is important in its secondary structure. It is located near the subunit interface in the base of the L7/L12 stalk, and near the tRNA binding site of the peptidyltransferase center. This Microcystis aeruginosa (strain NIES-843 / IAM M-2473) protein is Large ribosomal subunit protein uL6.